The following is a 130-amino-acid chain: Histone H2A type 1 (130 aa).

Residues Met-1–Ala-22 are disordered. N-acetylserine is present on Ser-2. Position 2 is a phosphoserine; by RPS6KA5 (Ser-2). Arg-4 carries the post-translational modification Citrulline; alternate. Arg-4 carries the symmetric dimethylarginine; by PRMT5; alternate modification. At Lys-6 the chain carries N6-(2-hydroxyisobutyryl)lysine. Basic residues predominate over residues Gln-7–Ser-19. N6-(2-hydroxyisobutyryl)lysine; alternate is present on Lys-10. Residue Lys-10 is modified to N6-lactoyllysine; alternate. The residue at position 10 (Lys-10) is an N6-succinyllysine; alternate. Glycyl lysine isopeptide (Lys-Gly) (interchain with G-Cter in ubiquitin) cross-links involve residues Lys-14 and Lys-16. An N6-(2-hydroxyisobutyryl)lysine; alternate modification is found at Lys-37. Lys-37 bears the N6-(beta-hydroxybutyryl)lysine; alternate mark. N6-crotonyllysine; alternate is present on Lys-37. An N6-(2-hydroxyisobutyryl)lysine mark is found at Lys-75 and Lys-76. Lys-96 is modified (N6-(2-hydroxyisobutyryl)lysine; alternate). Lys-96 carries the N6-succinyllysine; alternate modification. The residue at position 96 (Lys-96) is an N6-glutaryllysine; alternate. Lys-100 carries the post-translational modification N6-glutaryllysine. The residue at position 105 (Gln-105) is an N5-methylglutamine. Position 119 is an N6-(2-hydroxyisobutyryl)lysine; alternate (Lys-119). An N6-crotonyllysine; alternate mark is found at Lys-119 and Lys-120. N6-glutaryllysine; alternate occurs at positions 119 and 120. Lys-120 participates in a covalent cross-link: Glycyl lysine isopeptide (Lys-Gly) (interchain with G-Cter in ubiquitin); alternate. Thr-121 is modified (phosphothreonine; by DCAF1). At Lys-126 the chain carries N6-crotonyllysine; alternate. Residue Lys-126 is modified to N6-glutaryllysine; alternate.

This sequence belongs to the histone H2A family. As to quaternary structure, the nucleosome is a histone octamer containing two molecules each of H2A, H2B, H3 and H4 assembled in one H3-H4 heterotetramer and two H2A-H2B heterodimers. The octamer wraps approximately 147 bp of DNA. Interacts with VRK1; the interaction is mediated by the nucleosome acidic patch, a cluster of negatively charged residues of H2A and H2B forming a cleft within the nucleosome core. Deiminated on Arg-4 in granulocytes upon calcium entry. In terms of processing, monoubiquitination of Lys-120 (H2AK119Ub) by RING1, TRIM37 and RNF2/RING2 complex gives a specific tag for epigenetic transcriptional repression and participates in X chromosome inactivation of female mammals. It is involved in the initiation of both imprinted and random X inactivation. Ubiquitinated H2A is enriched in inactive X chromosome chromatin. Ubiquitination of H2A functions downstream of methylation of 'Lys-27' of histone H3 (H3K27me). H2AK119Ub by RNF2/RING2 can also be induced by ultraviolet and may be involved in DNA repair. Following DNA double-strand breaks (DSBs), it is ubiquitinated through 'Lys-63' linkage of ubiquitin moieties by the E2 ligase UBE2N and the E3 ligases RNF8 and RNF168, leading to the recruitment of repair proteins to sites of DNA damage. Ubiquitination at Lys-14 and Lys-16 (H2AK13Ub and H2AK15Ub, respectively) in response to DNA damage is initiated by RNF168 that mediates monoubiquitination at these 2 sites, and 'Lys-63'-linked ubiquitin are then conjugated to monoubiquitin; RNF8 is able to extend 'Lys-63'-linked ubiquitin chains in vitro. H2AK119Ub and ionizing radiation-induced 'Lys-63'-linked ubiquitination (H2AK13Ub and H2AK15Ub) are distinct events. Post-translationally, phosphorylation on Ser-2 (H2AS1ph) is enhanced during mitosis. Phosphorylation on Ser-2 by RPS6KA5/MSK1 directly represses transcription. Acetylation of H3 inhibits Ser-2 phosphorylation by RPS6KA5/MSK1. Phosphorylation at Thr-121 (H2AT120ph) by DCAF1 is present in the regulatory region of many tumor suppresor genes and down-regulates their transcription. Symmetric dimethylation on Arg-4 by the PRDM1/PRMT5 complex may play a crucial role in the germ-cell lineage. In terms of processing, glutamine methylation at Gln-105 (H2AQ104me) by FBL is specifically dedicated to polymerase I. It is present at 35S ribosomal DNA locus and impairs binding of the FACT complex. Post-translationally, crotonylation (Kcr) is specifically present in male germ cells and marks testis-specific genes in post-meiotic cells, including X-linked genes that escape sex chromosome inactivation in haploid cells. Crotonylation marks active promoters and enhancers and confers resistance to transcriptional repressors. It is also associated with post-meiotically activated genes on autosomes. Lactylated in macrophages by EP300/P300 by using lactoyl-CoA directly derived from endogenous or exogenous lactate, leading to stimulates gene transcription.

It is found in the nucleus. Its subcellular location is the chromosome. Functionally, core component of nucleosome. Nucleosomes wrap and compact DNA into chromatin, limiting DNA accessibility to the cellular machineries which require DNA as a template. Histones thereby play a central role in transcription regulation, DNA repair, DNA replication and chromosomal stability. DNA accessibility is regulated via a complex set of post-translational modifications of histones, also called histone code, and nucleosome remodeling. The chain is Histone H2A type 1 from Bos taurus (Bovine).